Here is a 392-residue protein sequence, read N- to C-terminus: Bifunctional enzyme IspD/IspF (392 aa).

2 2-C-methyl-D-erythritol 4-phosphate cytidylyltransferase regions span residues 1-234 (MTES…MMRT) and 1-235 (MTES…MRTA). A 2-C-methyl-D-erythritol 2,4-cyclodiphosphate synthase region spans residues 235–392 (AVGMGYDVHR…AVATIQLPET (158 aa)). Asp-241 and His-243 together coordinate a divalent metal cation. Residues 241–243 (DVH) and 267–268 (HS) each bind 4-CDP-2-C-methyl-D-erythritol 2-phosphate. His-275 contacts a divalent metal cation. Residues 289 to 291 (DIG), 365 to 368 (TTTE), Phe-372, and Arg-375 contribute to the 4-CDP-2-C-methyl-D-erythritol 2-phosphate site.

In the N-terminal section; belongs to the IspD/TarI cytidylyltransferase family. IspD subfamily. This sequence in the C-terminal section; belongs to the IspF family. Requires a divalent metal cation as cofactor.

The enzyme catalyses 2-C-methyl-D-erythritol 4-phosphate + CTP + H(+) = 4-CDP-2-C-methyl-D-erythritol + diphosphate. It catalyses the reaction 4-CDP-2-C-methyl-D-erythritol 2-phosphate = 2-C-methyl-D-erythritol 2,4-cyclic diphosphate + CMP. Its pathway is isoprenoid biosynthesis; isopentenyl diphosphate biosynthesis via DXP pathway; isopentenyl diphosphate from 1-deoxy-D-xylulose 5-phosphate: step 2/6. The protein operates within isoprenoid biosynthesis; isopentenyl diphosphate biosynthesis via DXP pathway; isopentenyl diphosphate from 1-deoxy-D-xylulose 5-phosphate: step 4/6. In terms of biological role, bifunctional enzyme that catalyzes the formation of 4-diphosphocytidyl-2-C-methyl-D-erythritol from CTP and 2-C-methyl-D-erythritol 4-phosphate (MEP) (IspD), and catalyzes the conversion of 4-diphosphocytidyl-2-C-methyl-D-erythritol 2-phosphate (CDP-ME2P) to 2-C-methyl-D-erythritol 2,4-cyclodiphosphate (ME-CPP) with a corresponding release of cytidine 5-monophosphate (CMP) (IspF). This Sphingopyxis alaskensis (strain DSM 13593 / LMG 18877 / RB2256) (Sphingomonas alaskensis) protein is Bifunctional enzyme IspD/IspF.